We begin with the raw amino-acid sequence, 359 residues long: Phospho-N-acetylmuramoyl-pentapeptide-transferase (359 aa).

10 consecutive transmembrane segments (helical) span residues 3–23 (QILI…PVLI), 55–75 (VAIL…GLAL), 84–104 (GLLV…DDLI), 120–140 (TVGI…FGNA), 156–176 (IATV…LVSA), 187–207 (LDGL…LITF), 231–251 (LALV…WNAA), 255–275 (IFMG…LSVT), 280–300 (ILAV…VVQI), and 334–354 (FWLL…GEWL).

This sequence belongs to the glycosyltransferase 4 family. MraY subfamily. It depends on Mg(2+) as a cofactor.

Its subcellular location is the cell membrane. It catalyses the reaction UDP-N-acetyl-alpha-D-muramoyl-L-alanyl-gamma-D-glutamyl-meso-2,6-diaminopimeloyl-D-alanyl-D-alanine + di-trans,octa-cis-undecaprenyl phosphate = di-trans,octa-cis-undecaprenyl diphospho-N-acetyl-alpha-D-muramoyl-L-alanyl-D-glutamyl-meso-2,6-diaminopimeloyl-D-alanyl-D-alanine + UMP. The protein operates within cell wall biogenesis; peptidoglycan biosynthesis. In terms of biological role, catalyzes the initial step of the lipid cycle reactions in the biosynthesis of the cell wall peptidoglycan: transfers peptidoglycan precursor phospho-MurNAc-pentapeptide from UDP-MurNAc-pentapeptide onto the lipid carrier undecaprenyl phosphate, yielding undecaprenyl-pyrophosphoryl-MurNAc-pentapeptide, known as lipid I. This chain is Phospho-N-acetylmuramoyl-pentapeptide-transferase, found in Mycobacterium sp. (strain JLS).